The sequence spans 466 residues: MAKGASISGFPEWLPAERVVEQRVIDTLREVFELNGFIGIETRAVEQGSSLLKKGETSKEIYLLSRLQEVGHESDIPVEQRLGLHFDLTVPLSRYVVEHSGALPFPFKRWQIQKVWRGERPQEGRFREFVQADIDVVGDGTLPSHYEVELPLVMVNALERLREFGLPKATVHANNRKLSEGFYRGLGLTDIEGVLREIDKLDKIGPQAVTDLLVETCGATEAQANACLELAQVTAEDGQELIEKFNGLCEIHHIPFDGDEYAMAKEGLDTLSMIIDEARRIRPGSVMADLKIARGLDYYTGSVYETFLEGASDLGSICSGGRYDNLATQGNRKYPGVGLSIGLSRLVSYMLHRAGATASRMSPACVLVAVWDEENRGDSNAIANTLRSRGIAADVAPTAAKLGKQIKYADKLGIPYVWFPNENPENDGSDEVKNIITGDQRPADAQSWQPDTVYAQQTVSINADNR.

Belongs to the class-II aminoacyl-tRNA synthetase family. As to quaternary structure, homodimer.

The protein localises to the cytoplasm. The catalysed reaction is tRNA(His) + L-histidine + ATP = L-histidyl-tRNA(His) + AMP + diphosphate + H(+). The polypeptide is Histidine--tRNA ligase (Bifidobacterium animalis subsp. lactis (strain AD011)).